Here is a 425-residue protein sequence, read N- to C-terminus: GTPase Obg (425 aa).

In terms of domain architecture, Obg spans 1 to 158 (MFVDVARIYV…RWLLLELKVV (158 aa)). Residues 159–330 (ADVGLVGFPN…LLEAAYDLIR (172 aa)) enclose the OBG-type G domain. Residues 165-172 (GFPNAGKS), 190-194 (FTTLT), 212-215 (DIPG), 282-285 (NKMD), and 311-313 (SGA) each bind GTP. The Mg(2+) site is built by S172 and T192. The 78-residue stretch at 345-422 (VYRPKEEGWR…VCDIEFELMA (78 aa)) folds into the OCT domain.

Belongs to the TRAFAC class OBG-HflX-like GTPase superfamily. OBG GTPase family. Monomer. It depends on Mg(2+) as a cofactor.

Its subcellular location is the cytoplasm. Its function is as follows. An essential GTPase which binds GTP, GDP and possibly (p)ppGpp with moderate affinity, with high nucleotide exchange rates and a fairly low GTP hydrolysis rate. Plays a role in control of the cell cycle, stress response, ribosome biogenesis and in those bacteria that undergo differentiation, in morphogenesis control. This Symbiobacterium thermophilum (strain DSM 24528 / JCM 14929 / IAM 14863 / T) protein is GTPase Obg.